A 338-amino-acid polypeptide reads, in one-letter code: Anthranilate phosphoribosyltransferase (338 aa).

5-phospho-alpha-D-ribose 1-diphosphate-binding positions include G81, 84–85 (GD), T89, 91–94 (NVST), 109–117 (KHGNRALSS), and A121. G81 contacts anthranilate. S93 serves as a coordination point for Mg(2+). N112 lines the anthranilate pocket. Residue R167 coordinates anthranilate. Residues D225 and E226 each contribute to the Mg(2+) site.

Belongs to the anthranilate phosphoribosyltransferase family. Homodimer. Requires Mg(2+) as cofactor.

The enzyme catalyses N-(5-phospho-beta-D-ribosyl)anthranilate + diphosphate = 5-phospho-alpha-D-ribose 1-diphosphate + anthranilate. The protein operates within amino-acid biosynthesis; L-tryptophan biosynthesis; L-tryptophan from chorismate: step 2/5. Its function is as follows. Catalyzes the transfer of the phosphoribosyl group of 5-phosphorylribose-1-pyrophosphate (PRPP) to anthranilate to yield N-(5'-phosphoribosyl)-anthranilate (PRA). The polypeptide is Anthranilate phosphoribosyltransferase (Chelativorans sp. (strain BNC1)).